A 412-amino-acid chain; its full sequence is Palmitoyltransferase ZDHHC6 (412 aa).

Over Met-1–Pro-24 the chain is Cytoplasmic. The helical transmembrane segment at Ile-25–Trp-45 threads the bilayer. The Lumenal segment spans residues Tyr-46–Asn-57. The chain crosses the membrane as a helical span at residues Phe-58 to Val-78. At Gly-79–Tyr-143 the chain is on the cytoplasmic side. Positions Gln-99–Leu-149 constitute a DHHC domain. Cys-129 (S-palmitoyl cysteine intermediate) is an active-site residue. Residues Phe-144–Met-164 traverse the membrane as a helical segment. Residues Thr-165–Ala-205 are Lumenal-facing. The chain crosses the membrane as a helical span at residues Thr-206–Ile-226. The Cytoplasmic portion of the chain corresponds to Gln-227–Gln-412. The 86-residue stretch at Gln-313 to Tyr-398 folds into the SH3 domain. 3 S-palmitoyl cysteine lipidation sites follow: Cys-328, Cys-329, and Cys-343. The short motif at Lys-409–Gln-412 is the Di-lysine motif element.

This sequence belongs to the DHHC palmitoyltransferase family.

It localises to the endoplasmic reticulum membrane. It catalyses the reaction L-cysteinyl-[protein] + hexadecanoyl-CoA = S-hexadecanoyl-L-cysteinyl-[protein] + CoA. It carries out the reaction L-cysteinyl-[protein] + octadecanoyl-CoA = S-octadecanoyl-L-cysteinyl-[protein] + CoA. Its function is as follows. Endoplasmic reticulum palmitoyl acyltransferase that probably catalyzes the addition of palmitate onto various protein substrates and is involved in a variety of cellular processes. Could also function as a stearoyltransferase. The protein is Palmitoyltransferase ZDHHC6 of Danio rerio (Zebrafish).